Consider the following 369-residue polypeptide: MPVLTTDAESETGIPKSLSNEPPSETMEEIEHTCPQPRLTLTAPAPFADESSCQCQAPHEKLTVAQARLGTPVDRPVRVYADGIFDLFHSGHARALMQAKTLFPNSYLLVGVCSDDLTHKFKGFTVMNEAERYEALRHCRYVDEVIRDAPWTLTPEFLEKHKIDFVAHDDIPYSSAGSDDVYKHIKEAGMFVPTQRTEGISTSDIITRIVRDYDVYARRNLQRGYTAKELNVSFINEKKYRFQNQVDKMKEKVKNVEERSKEFVNRVEEKSHDLIQKWEEKSREFIGNFLELFGPDGAWKQMFQERSSRMLQALSPKQSPVSSPTRSRSPSRSPSPTFSWLPNKTSPPSSPKAASASISSMSEGDEDEK.

Residues 1–27 (MPVLTTDAESETGIPKSLSNEPPSETM) form a disordered region. Ile84, Phe85, His92, and Lys122 together coordinate CTP. Phosphocholine is bound by residues Lys122 and Trp151. CTP-binding residues include His168, Asp169, Tyr173, Gln195, Arg196, Thr197, and Ile200. Positions 309–369 (RMLQALSPKQ…SMSEGDEDEK (61 aa)) are disordered. 7 positions are modified to phosphoserine: Ser315, Ser319, Ser322, Ser323, Ser329, Ser331, and Ser335. Over residues 319-339 (SPVSSPTRSRSPSRSPSPTFS) the composition is skewed to low complexity. A Phosphothreonine modification is found at Thr345. 6 positions are modified to phosphoserine: Ser346, Ser349, Ser350, Ser355, Ser360, and Ser362. Positions 351–362 (PKAASASISSMS) are enriched in low complexity.

The protein belongs to the cytidylyltransferase family. Homodimer. As to expression, highly expressed in brain (at protein level). Expressed in liver (at protein level). Expressed at lower levels in lung and gonads. Expressed in brain (at protein level). Expressed at lower levels in lung and gonads.

The protein localises to the endoplasmic reticulum. It is found in the cytoplasm. The enzyme catalyses phosphocholine + CTP + H(+) = CDP-choline + diphosphate. The protein operates within phospholipid metabolism; phosphatidylcholine biosynthesis; phosphatidylcholine from phosphocholine: step 1/2. Its function is as follows. Catalyzes the key rate-limiting step in the CDP-choline pathway for phosphatidylcholine biosynthesis. Plays an important role in ovary maturation and the maintenance of sperm production. In terms of biological role, catalyzes the key rate-limiting step in the CDP-choline pathway for phosphatidylcholine biosynthesis. This chain is Choline-phosphate cytidylyltransferase B (Pcyt1b), found in Mus musculus (Mouse).